The primary structure comprises 132 residues: Small ribosomal subunit protein uS11 (132 aa).

The protein belongs to the universal ribosomal protein uS11 family. Part of the 30S ribosomal subunit. Interacts with proteins S7 and S18. Binds to IF-3.

Its function is as follows. Located on the platform of the 30S subunit, it bridges several disparate RNA helices of the 16S rRNA. Forms part of the Shine-Dalgarno cleft in the 70S ribosome. This Clostridium kluyveri (strain NBRC 12016) protein is Small ribosomal subunit protein uS11.